An 87-amino-acid polypeptide reads, in one-letter code: U14-lycotoxin-Ls1b (87 aa).

A signal peptide spans 1-20 (MNSKVFVVLLLLALSTCVLS). Residues 21–66 (EKYCPTPRNTSCKKMNIRNNCCRDSDCTSNAFCCAEPCGNFCHKAS) form the WAP domain. 5 disulfides stabilise this stretch: Cys-24–Cys-54, Cys-32–Cys-58, Cys-41–Cys-53, Cys-42–Cys-80, and Cys-47–Cys-62.

This sequence belongs to the venom protein 11 family. 01 (wap-1) subfamily. Contains 5 disulfide bonds. As to expression, expressed by the venom gland.

The protein localises to the secreted. In terms of biological role, has antibacterial activity. The protein is U14-lycotoxin-Ls1b of Lycosa singoriensis (Wolf spider).